Reading from the N-terminus, the 678-residue chain is Protein MALE DISCOVERER 2 (678 aa).

The N-terminal stretch at 1-25 is a signal peptide; that stretch reads MMGCGFHFPWFFFLIIGLQAPLSLS. The Extracellular segment spans residues 26–323; sequence LTSQGSALLK…SKGSKHVWLY (298 aa). Residue asparagine 52 is glycosylated (N-linked (GlcNAc...) asparagine). LRR repeat units follow at residues 71–94, 95–117, 119–141, and 143–164; these read KVQILDLSGYSLEGTLAPELSQLS, DLRSLILSRNHFSGGIPKEYGSF, NLEVLDLRENDLSGQIPPELSNG, and SLKHLLLSGNKFSDDMRIKIVR. Residues 247–314 form a disordered region; sequence LAAEPAPSAP…KNQPQDNKQS (68 aa). Positions 296–311 are enriched in polar residues; that stretch reads KGSTSPDISKNQPQDN. Residues 324-344 form a helical membrane-spanning segment; the sequence is VVIAVASFVGLLIIVAVIFFC. The Cytoplasmic segment spans residues 345–678; sequence RKRAVKSIGP…ELEILSSEAT (334 aa). Positions 346–651 constitute a Protein kinase domain; that stretch reads KRAVKSIGPW…DVAEQLKQVI (306 aa).

It belongs to the protein kinase superfamily. Ser/Thr protein kinase family. As to expression, expressed in pollen tubes and seedlings.

The protein localises to the endomembrane system. The enzyme catalyses L-seryl-[protein] + ATP = O-phospho-L-seryl-[protein] + ADP + H(+). It carries out the reaction L-threonyl-[protein] + ATP = O-phospho-L-threonyl-[protein] + ADP + H(+). Functionally, involved in the pollen tube perception of the female signal by binding an unidentified female attractant. May be involved in the regulation of root hairs development. The protein is Protein MALE DISCOVERER 2 (MDIS2) of Arabidopsis thaliana (Mouse-ear cress).